Reading from the N-terminus, the 945-residue chain is Splicing factor, suppressor of white-apricot homolog (945 aa).

2 disordered regions span residues 1–28 (MYGA…GTGT) and 157–190 (YYDP…PFIA). 2 stretches are compositionally biased toward basic and acidic residues: residues 9–21 (AKAE…KEEA) and 169–178 (PSKQREKSEA). Residues 211–253 (IIERTANFVCKQGAQFEIMLKAKQARNSQFDFLRFDHYLNPYY) form an SURP motif 1 repeat. The segment at 269 to 298 (AESKSEEKKKSGPTSDNEEEDDEEDGSYLH) is disordered. Phosphoserine is present on serine 283. The span at 284–294 (DNEEEDDEEDG) shows a compositional bias: acidic residues. Lysine 315 carries the post-translational modification N6-acetyllysine. Disordered regions lie at residues 332-355 (KAQA…PSQV) and 403-438 (SSSP…STTT). The segment covering 335–352 (ADSSAPAPPTADGTPAQP) has biased composition (low complexity). The segment covering 412–425 (VPPPPGTTPPPPPT) has biased composition (pro residues). The span at 426–438 (TAESSSGVTSTTT) shows a compositional bias: low complexity. Residues 458–498 (VIDKLAEYVARNGLKFETSVRAKNDQRFEFLQPWHQYNAYY) form an SURP motif 2 repeat. 3 disordered regions span residues 512 to 566 (GSTQ…TVDG), 589 to 680 (PLEK…QAER), and 714 to 921 (GVMP…VQSK). The segment covering 514–527 (TQAASTAEEAPTET) has biased composition (low complexity). The span at 528–540 (AVEESSEAGEDGA) shows a compositional bias: acidic residues. Positions 589-598 (PLEKNRVKLD) are enriched in basic and acidic residues. Residues serine 601 and serine 621 each carry the phosphoserine modification. Low complexity predominate over residues 615–630 (SSVANPSPAAAPPSAV). Positions 632–686 (EEKKPQLTQEELEAKQAKQKLEDRLAAAAREKLAQASKESKEKQLQAERKRKAAL) form a coiled coil. Threonine 639 is modified (phosphothreonine). 2 stretches are compositionally biased toward basic and acidic residues: residues 643-679 (LEAK…LQAE) and 733-752 (KPPE…EERE). 2 stretches are compositionally biased toward basic residues: residues 753–787 (KKKK…KAKH) and 795–810 (TVRR…RRRA). The span at 811–821 (HSPERRREDRS) shows a compositional bias: basic and acidic residues. A phosphoserine mark is found at serine 829 and serine 831. Residues 835–861 (SRKRTRSRSPHEKKKKRRSRSRTKAKA) show a composition bias toward basic residues. The span at 871-894 (QAAQRPSAHSAHSASISPVESRGS) shows a compositional bias: low complexity. Over residues 895-908 (SQERSRGVSQEKDG) the composition is skewed to basic and acidic residues. Phosphoserine occurs at positions 899 and 903. A compositionally biased stretch (low complexity) spans 909-920 (QISSAIVSSVQS).

It localises to the nucleus. Plays a role as an alternative splicing regulator. Regulate its own expression at the level of RNA processing. Also regulates the splicing of fibronectin and CD45 genes. May act, at least in part, by interaction with other R/S-containing splicing factors. Represses the splicing of MAPT/Tau exon 10. This is Splicing factor, suppressor of white-apricot homolog (Sfswap) from Rattus norvegicus (Rat).